We begin with the raw amino-acid sequence, 458 residues long: Bifunctional protein GlmU (458 aa).

The segment at 1–232 is pyrophosphorylase; it reads MISPLSVIIL…TFEIEGVNNR (232 aa). UDP-N-acetyl-alpha-D-glucosamine is bound by residues 10 to 13, K24, Q79, 84 to 85, 106 to 108, G142, E157, N172, and N230; these read LAAG, GT, and YGD. Mg(2+) is bound at residue D108. N230 is a binding site for Mg(2+). Residues 233-253 form a linker region; the sequence is QQLASLERTWQGKLVADLQEA. The N-acetyltransferase stretch occupies residues 254–458; it reads GVQFADPTRV…KDNFQRPTKK (205 aa). R336 and K354 together coordinate UDP-N-acetyl-alpha-D-glucosamine. The Proton acceptor role is filled by H366. 2 residues coordinate UDP-N-acetyl-alpha-D-glucosamine: Y369 and N380. Acetyl-CoA-binding positions include A383, 389-390, S408, A426, and R443; that span reads NY.

This sequence in the N-terminal section; belongs to the N-acetylglucosamine-1-phosphate uridyltransferase family. In the C-terminal section; belongs to the transferase hexapeptide repeat family. Homotrimer. Requires Mg(2+) as cofactor.

The protein resides in the cytoplasm. It catalyses the reaction alpha-D-glucosamine 1-phosphate + acetyl-CoA = N-acetyl-alpha-D-glucosamine 1-phosphate + CoA + H(+). It carries out the reaction N-acetyl-alpha-D-glucosamine 1-phosphate + UTP + H(+) = UDP-N-acetyl-alpha-D-glucosamine + diphosphate. Its pathway is nucleotide-sugar biosynthesis; UDP-N-acetyl-alpha-D-glucosamine biosynthesis; N-acetyl-alpha-D-glucosamine 1-phosphate from alpha-D-glucosamine 6-phosphate (route II): step 2/2. It functions in the pathway nucleotide-sugar biosynthesis; UDP-N-acetyl-alpha-D-glucosamine biosynthesis; UDP-N-acetyl-alpha-D-glucosamine from N-acetyl-alpha-D-glucosamine 1-phosphate: step 1/1. The protein operates within bacterial outer membrane biogenesis; LPS lipid A biosynthesis. Catalyzes the last two sequential reactions in the de novo biosynthetic pathway for UDP-N-acetylglucosamine (UDP-GlcNAc). The C-terminal domain catalyzes the transfer of acetyl group from acetyl coenzyme A to glucosamine-1-phosphate (GlcN-1-P) to produce N-acetylglucosamine-1-phosphate (GlcNAc-1-P), which is converted into UDP-GlcNAc by the transfer of uridine 5-monophosphate (from uridine 5-triphosphate), a reaction catalyzed by the N-terminal domain. The polypeptide is Bifunctional protein GlmU (Psychrobacter arcticus (strain DSM 17307 / VKM B-2377 / 273-4)).